The chain runs to 86 residues: Putative regulatory protein Desal_2819 (86 aa).

This sequence belongs to the RemA family.

This Maridesulfovibrio salexigens (strain ATCC 14822 / DSM 2638 / NCIMB 8403 / VKM B-1763) (Desulfovibrio salexigens) protein is Putative regulatory protein Desal_2819.